The sequence spans 688 residues: Polyribonucleotide nucleotidyltransferase (688 aa).

Aspartate 484 and aspartate 490 together coordinate Mg(2+). Residues 550–609 (PTTEIFNVAPDKIVEIIGQGGRVIKEIVEKFEVKIDLNKPSGEVKIMGNKERVLKTKEFI) enclose the KH domain. Positions 626–688 (DEVLEAQVKR…NKGKIALDLA (63 aa)) constitute an S1 motif domain.

It belongs to the polyribonucleotide nucleotidyltransferase family. Mg(2+) is required as a cofactor.

It is found in the cytoplasm. It carries out the reaction RNA(n+1) + phosphate = RNA(n) + a ribonucleoside 5'-diphosphate. Functionally, involved in mRNA degradation. Catalyzes the phosphorolysis of single-stranded polyribonucleotides processively in the 3'- to 5'-direction. In Helicobacter pylori (strain ATCC 700392 / 26695) (Campylobacter pylori), this protein is Polyribonucleotide nucleotidyltransferase.